The primary structure comprises 180 residues: Large ribosomal subunit protein uL6 (180 aa).

It belongs to the universal ribosomal protein uL6 family. Part of the 50S ribosomal subunit.

In terms of biological role, this protein binds to the 23S rRNA, and is important in its secondary structure. It is located near the subunit interface in the base of the L7/L12 stalk, and near the tRNA binding site of the peptidyltransferase center. The sequence is that of Large ribosomal subunit protein uL6 from Thermodesulfovibrio yellowstonii (strain ATCC 51303 / DSM 11347 / YP87).